A 29-amino-acid chain; its full sequence is Snaclec multactivase regulatory subunit (29 aa).

A C-type lectin domain is found at D1–C29. C2 and C13 are disulfide-bonded.

Belongs to the snaclec family. Heterodimer of a metalloproteinase subunit and a regulatory subunit comprising two homologous polypeptides disulfide-linked. In terms of tissue distribution, expressed by the venom gland.

It localises to the secreted. Functionally, multactivase, a carinactivase-like calcium-dependent prothrombin activator, activates prothrombin via recognition of the calcium ion bound conformation of its gamma-carboxyglutamic acid (GLA) domain, and the subsequent conversion of prothrombin to active thrombin is catalyzed by the catalytic subunit. This chain is Snaclec multactivase regulatory subunit, found in Echis multisquamatus (Central Asian sand viper).